The following is a 407-amino-acid chain: Imidazolonepropionase (407 aa).

The Fe(3+) site is built by H68 and H70. Positions 68 and 70 each coordinate Zn(2+). R77, Y140, and H173 together coordinate 4-imidazolone-5-propanoate. Y140 provides a ligand contact to N-formimidoyl-L-glutamate. H238 contacts Fe(3+). H238 provides a ligand contact to Zn(2+). Residue Q241 participates in 4-imidazolone-5-propanoate binding. Fe(3+) is bound at residue D313. D313 lines the Zn(2+) pocket. The N-formimidoyl-L-glutamate site is built by N315 and G317. T318 contacts 4-imidazolone-5-propanoate.

This sequence belongs to the metallo-dependent hydrolases superfamily. HutI family. Zn(2+) serves as cofactor. Fe(3+) is required as a cofactor.

It is found in the cytoplasm. It catalyses the reaction 4-imidazolone-5-propanoate + H2O = N-formimidoyl-L-glutamate. The protein operates within amino-acid degradation; L-histidine degradation into L-glutamate; N-formimidoyl-L-glutamate from L-histidine: step 3/3. Catalyzes the hydrolytic cleavage of the carbon-nitrogen bond in imidazolone-5-propanoate to yield N-formimidoyl-L-glutamate. It is the third step in the universal histidine degradation pathway. This Burkholderia pseudomallei (strain 1710b) protein is Imidazolonepropionase.